We begin with the raw amino-acid sequence, 304 residues long: Dihydroorotate dehydrogenase B (NAD(+)), catalytic subunit (304 aa).

FMN is bound by residues S21 and 45 to 46; that span reads KA. Substrate is bound by residues K45 and 69 to 73; that span reads NAIGL. FMN-binding residues include N99 and N127. N127 contributes to the substrate binding site. C130 acts as the Nucleophile in catalysis. FMN-binding residues include K165 and I191. Residue 192–193 participates in substrate binding; sequence NT. FMN-binding positions include G217, 243–244, and 265–266; these read GG and GT.

It belongs to the dihydroorotate dehydrogenase family. Type 1 subfamily. Heterotetramer of 2 PyrK and 2 PyrD type B subunits. Requires FMN as cofactor.

It localises to the cytoplasm. The catalysed reaction is (S)-dihydroorotate + NAD(+) = orotate + NADH + H(+). The protein operates within pyrimidine metabolism; UMP biosynthesis via de novo pathway; orotate from (S)-dihydroorotate (NAD(+) route): step 1/1. Functionally, catalyzes the conversion of dihydroorotate to orotate with NAD(+) as electron acceptor. The sequence is that of Dihydroorotate dehydrogenase B (NAD(+)), catalytic subunit (pyrD) from Listeria monocytogenes serotype 4b (strain F2365).